The sequence spans 177 residues: Adenine phosphoribosyltransferase (177 aa).

This sequence belongs to the purine/pyrimidine phosphoribosyltransferase family. Homodimer.

Its subcellular location is the cytoplasm. The enzyme catalyses AMP + diphosphate = 5-phospho-alpha-D-ribose 1-diphosphate + adenine. It functions in the pathway purine metabolism; AMP biosynthesis via salvage pathway; AMP from adenine: step 1/1. Functionally, catalyzes a salvage reaction resulting in the formation of AMP, that is energically less costly than de novo synthesis. The polypeptide is Adenine phosphoribosyltransferase (Leptospira borgpetersenii serovar Hardjo-bovis (strain JB197)).